Reading from the N-terminus, the 250-residue chain is Tripartite motif-containing protein 73 (250 aa).

The RING-type zinc-finger motif lies at 16–57 (CPICLEVFKESLMLQCGHSYCKGCLVSLSYHLDTKVRCPMCW). The B box-type zinc finger occupies 84 to 125 (PEPKVCVHHRNPLSLFCEKDQELICGLCGLLGSHQHHPVTPV). 4 residues coordinate Zn(2+): Cys89, His92, Cys111, and His117. Coiled coils occupy residues 125 to 169 (VSTV…NESD) and 204 to 235 (LVAS…FGNE).

It belongs to the TRIM/RBCC family.

This chain is Tripartite motif-containing protein 73 (TRIM73), found in Homo sapiens (Human).